Consider the following 273-residue polypeptide: Phosphate import ATP-binding protein PstB 1 (273 aa).

The 242-residue stretch at 27 to 268 folds into the ABC transporter domain; sequence ISIEHLSLYY…PLKKQTEDYI (242 aa). 59–66 is an ATP binding site; sequence GPSGCGKS.

This sequence belongs to the ABC transporter superfamily. Phosphate importer (TC 3.A.1.7) family. In terms of assembly, the complex is composed of two ATP-binding proteins (PstB), two transmembrane proteins (PstC and PstA) and a solute-binding protein (PstS).

The protein localises to the cell inner membrane. It catalyses the reaction phosphate(out) + ATP + H2O = ADP + 2 phosphate(in) + H(+). Part of the ABC transporter complex PstSACB involved in phosphate import. Responsible for energy coupling to the transport system. The protein is Phosphate import ATP-binding protein PstB 1 of Vibrio cholerae serotype O1 (strain ATCC 39315 / El Tor Inaba N16961).